Consider the following 313-residue polypeptide: Probable 5-dehydro-4-deoxyglucarate dehydratase 1 (313 aa).

The protein belongs to the DapA family.

It catalyses the reaction 5-dehydro-4-deoxy-D-glucarate + H(+) = 2,5-dioxopentanoate + CO2 + H2O. The protein operates within carbohydrate acid metabolism; D-glucarate degradation; 2,5-dioxopentanoate from D-glucarate: step 2/2. This is Probable 5-dehydro-4-deoxyglucarate dehydratase 1 from Streptomyces avermitilis (strain ATCC 31267 / DSM 46492 / JCM 5070 / NBRC 14893 / NCIMB 12804 / NRRL 8165 / MA-4680).